The chain runs to 250 residues: Proteasome subunit alpha type-4 (250 aa).

The protein belongs to the peptidase T1A family. In terms of assembly, the 26S proteasome consists of a 20S proteasome core and two 19S regulatory subunits. The 20S proteasome core is composed of 28 subunits that are arranged in four stacked rings, resulting in a barrel-shaped structure. The two end rings are each formed by seven alpha subunits, and the two central rings are each formed by seven beta subunits. The catalytic chamber with the active sites is on the inside of the barrel.

Its subcellular location is the cytoplasm. The protein localises to the nucleus. Its function is as follows. The proteasome is a multicatalytic proteinase complex which is characterized by its ability to cleave peptides with Arg, Phe, Tyr, Leu, and Glu adjacent to the leaving group at neutral or slightly basic pH. The proteasome has an ATP-dependent proteolytic activity. This Spinacia oleracea (Spinach) protein is Proteasome subunit alpha type-4 (PAC1).